The primary structure comprises 346 residues: Phosphate acyltransferase (346 aa).

The protein belongs to the PlsX family. In terms of assembly, homodimer. Probably interacts with PlsY.

The protein resides in the cytoplasm. It carries out the reaction a fatty acyl-[ACP] + phosphate = an acyl phosphate + holo-[ACP]. It functions in the pathway lipid metabolism; phospholipid metabolism. Catalyzes the reversible formation of acyl-phosphate (acyl-PO(4)) from acyl-[acyl-carrier-protein] (acyl-ACP). This enzyme utilizes acyl-ACP as fatty acyl donor, but not acyl-CoA. The polypeptide is Phosphate acyltransferase (Synechococcus elongatus (strain ATCC 33912 / PCC 7942 / FACHB-805) (Anacystis nidulans R2)).